The chain runs to 593 residues: Proline dehydrogenase 1, mitochondrial (593 aa).

Residues 24–44 (PAAREQPAAGPGAEPVCGPAE) are disordered. Lys-368 and Lys-479 each carry N6-acetyllysine.

The protein belongs to the proline oxidase family. It depends on FAD as a cofactor.

It localises to the mitochondrion matrix. The catalysed reaction is L-proline + a quinone = (S)-1-pyrroline-5-carboxylate + a quinol + H(+). It functions in the pathway amino-acid degradation; L-proline degradation into L-glutamate; L-glutamate from L-proline: step 1/2. In terms of biological role, converts proline to delta-1-pyrroline-5-carboxylate. This Bos taurus (Bovine) protein is Proline dehydrogenase 1, mitochondrial.